The chain runs to 483 residues: Regulatory protein ViaA (483 aa).

This sequence belongs to the ViaA family. As to quaternary structure, homodimer. Interacts with RavA.

The protein localises to the cytoplasm. Functionally, component of the RavA-ViaA chaperone complex, which may act on the membrane to optimize the function of some of the respiratory chains. ViaA stimulates the ATPase activity of RavA. The protein is Regulatory protein ViaA of Escherichia coli O1:K1 / APEC.